A 394-amino-acid chain; its full sequence is Elongation factor Tu (394 aa).

The tr-type G domain occupies 10–204 (KEHVNVGTIG…AVDTYIENPV (195 aa)). Positions 19–26 (GHVDHGKT) are G1. Residue 19–26 (GHVDHGKT) coordinates GTP. Position 26 (T26) interacts with Mg(2+). The interval 60–64 (GITIN) is G2. The tract at residues 81-84 (DCPG) is G3. Residues 81–85 (DCPGH) and 136–139 (NKCD) each bind GTP. The interval 136-139 (NKCD) is G4. The G5 stretch occupies residues 174-176 (SAL).

Belongs to the TRAFAC class translation factor GTPase superfamily. Classic translation factor GTPase family. EF-Tu/EF-1A subfamily. Monomer.

It is found in the cytoplasm. The enzyme catalyses GTP + H2O = GDP + phosphate + H(+). In terms of biological role, GTP hydrolase that promotes the GTP-dependent binding of aminoacyl-tRNA to the A-site of ribosomes during protein biosynthesis. The protein is Elongation factor Tu of Mycoplasmopsis synoviae (strain 53) (Mycoplasma synoviae).